Here is a 262-residue protein sequence, read N- to C-terminus: Indole-3-glycerol phosphate synthase (262 aa).

It belongs to the TrpC family.

It catalyses the reaction 1-(2-carboxyphenylamino)-1-deoxy-D-ribulose 5-phosphate + H(+) = (1S,2R)-1-C-(indol-3-yl)glycerol 3-phosphate + CO2 + H2O. It participates in amino-acid biosynthesis; L-tryptophan biosynthesis; L-tryptophan from chorismate: step 4/5. This Bordetella petrii (strain ATCC BAA-461 / DSM 12804 / CCUG 43448) protein is Indole-3-glycerol phosphate synthase.